The chain runs to 290 residues: tRNA-cytidine(32) 2-sulfurtransferase (290 aa).

Positions 36–41 match the PP-loop motif motif; sequence SGGKDS. [4Fe-4S] cluster is bound by residues C111, C114, and C202. The segment at 259–290 is disordered; that stretch reads DPWLDAEDEEAEDCGEPAGDGVVSLGGARGGR. Residues 262-273 show a composition bias toward acidic residues; that stretch reads LDAEDEEAEDCG.

This sequence belongs to the TtcA family. As to quaternary structure, homodimer. Mg(2+) serves as cofactor. Requires [4Fe-4S] cluster as cofactor.

The protein localises to the cytoplasm. The catalysed reaction is cytidine(32) in tRNA + S-sulfanyl-L-cysteinyl-[cysteine desulfurase] + AH2 + ATP = 2-thiocytidine(32) in tRNA + L-cysteinyl-[cysteine desulfurase] + A + AMP + diphosphate + H(+). It participates in tRNA modification. In terms of biological role, catalyzes the ATP-dependent 2-thiolation of cytidine in position 32 of tRNA, to form 2-thiocytidine (s(2)C32). The sulfur atoms are provided by the cysteine/cysteine desulfurase (IscS) system. This chain is tRNA-cytidine(32) 2-sulfurtransferase, found in Anaeromyxobacter dehalogenans (strain 2CP-C).